The chain runs to 565 residues: NAD-dependent malic enzyme (565 aa).

Tyr104 functions as the Proton donor in the catalytic mechanism. Residue Arg157 participates in NAD(+) binding. The Proton acceptor role is filled by Lys175. Glu246, Asp247, and Asp270 together coordinate a divalent metal cation. NAD(+) is bound by residues Asp270 and Asn418.

It belongs to the malic enzymes family. As to quaternary structure, homotetramer. It depends on Mg(2+) as a cofactor. Requires Mn(2+) as cofactor.

It catalyses the reaction (S)-malate + NAD(+) = pyruvate + CO2 + NADH. The enzyme catalyses oxaloacetate + H(+) = pyruvate + CO2. This Shigella boydii serotype 18 (strain CDC 3083-94 / BS512) protein is NAD-dependent malic enzyme.